The following is a 301-amino-acid chain: GTPase Era (301 aa).

An Era-type G domain is found at 7 to 175 (YCGFIAIVGR…AGIVRKHLPE (169 aa)). The G1 stretch occupies residues 15-22 (GRPNVGKS). 15–22 (GRPNVGKS) contributes to the GTP binding site. A G2 region spans residues 41–45 (QTTRH). Residues 62–65 (DTPG) form a G3 region. Residues 62–66 (DTPGL) and 124–127 (NKVD) contribute to the GTP site. The segment at 124–127 (NKVD) is G4. The interval 154-156 (LSA) is G5. In terms of domain architecture, KH type-2 spans 198–283 (IREKLMRFLG…HLELWVKVKS (86 aa)).

The protein belongs to the TRAFAC class TrmE-Era-EngA-EngB-Septin-like GTPase superfamily. Era GTPase family. As to quaternary structure, monomer.

Its subcellular location is the cytoplasm. It localises to the cell inner membrane. An essential GTPase that binds both GDP and GTP, with rapid nucleotide exchange. Plays a role in 16S rRNA processing and 30S ribosomal subunit biogenesis and possibly also in cell cycle regulation and energy metabolism. The polypeptide is GTPase Era (Enterobacter sp. (strain 638)).